Reading from the N-terminus, the 293-residue chain is ELMO domain-containing protein 2 (293 aa).

The ELMO domain occupies 126-282 (QHEKLLIKLW…KFHEKIKGLL (157 aa)).

Functionally, acts as a GTPase-activating protein (GAP) toward guanine nucleotide exchange factors like ARL2, ARL3, ARF1 and ARF6, but not for GTPases outside the Arf family. This is ELMO domain-containing protein 2 (ELMOD2) from Bos taurus (Bovine).